A 206-amino-acid chain; its full sequence is Outer-membrane lipoprotein carrier protein (206 aa).

The signal sequence occupies residues 1 to 20; the sequence is MRLIRMLLPVLALTTLTAHA.

This sequence belongs to the LolA family. In terms of assembly, monomer.

It is found in the periplasm. Participates in the translocation of lipoproteins from the inner membrane to the outer membrane. Only forms a complex with a lipoprotein if the residue after the N-terminal Cys is not an aspartate (The Asp acts as a targeting signal to indicate that the lipoprotein should stay in the inner membrane). In Pseudomonas fluorescens (strain Pf0-1), this protein is Outer-membrane lipoprotein carrier protein.